The following is a 217-amino-acid chain: uncharacterized protein (217 aa).

This is an uncharacterized protein from Haemophilus influenzae (strain ATCC 51907 / DSM 11121 / KW20 / Rd).